Consider the following 178-residue polypeptide: Protein 105R (178 aa).

Positions 1–18 (MYFLFFFLLFLFPVGVKG) are cleaved as a signal peptide.

This chain is Protein 105R, found in Pantherophis guttatus (Corn snake).